A 345-amino-acid chain; its full sequence is NADH-quinone oxidoreductase subunit 8 (345 aa).

Helical transmembrane passes span 15–35 (MLLQ…FMVY), 82–102 (FVYF…FVVI), 115–135 (VGIL…IMGG), 161–181 (LGLI…TAIV), 190–210 (LLNW…VSAL), 240–262 (YLLF…SLLF), 278–298 (WWMV…KAIV), and 309–329 (IGWK…AILA).

Belongs to the complex I subunit 1 family. In terms of assembly, NDH-1 is composed of at least 14 different subunits, Nqo1 to Nqo14. The complex has a L-shaped structure, with the hydrophobic arm (subunits Nqo7, Nqo8, Nqo10 to Nqo14) embedded in the inner membrane and the hydrophilic peripheral arm (subunits Nqo1 to Nqo6, Nqo9) protruding into the bacterial cytoplasm. The hydrophilic domain contains all the redox centers.

The protein resides in the cell inner membrane. The enzyme catalyses a quinone + NADH + 5 H(+)(in) = a quinol + NAD(+) + 4 H(+)(out). Its function is as follows. NDH-1 shuttles electrons from NADH, via FMN and iron-sulfur (Fe-S) centers, to quinones in the respiratory chain. The immediate electron acceptor for the enzyme in this species is believed to be ubiquinone. Couples the redox reaction to proton translocation (for every two electrons transferred, four hydrogen ions are translocated across the cytoplasmic membrane), and thus conserves the redox energy in a proton gradient. The sequence is that of NADH-quinone oxidoreductase subunit 8 from Paracoccus denitrificans.